A 1032-amino-acid chain; its full sequence is MGRESRHYRKRSASRGRSGSRSRSRSPSDKRSKRGDDRRSRSRDRDRRRERSRSRDKRRSRSRDRKRLRRSRSRERDRSRERRRSRSRDRRRSRSRSRGRRSRSSSPGSKTKKTENRSRSKEKAEGGDSSKEKKKDKDDKEDEKEKDAGNFDQNKLEEEMRKRKERVEKWREEQRKKAMENIGELKKEIEEMKQGKKWSLEDDDDDEDDPAEAEKEGTEMEDEELDPLDAYMEEVKEEVKKFNMRSVKGGAGNEKKSGPTVTKVVTVVTTKKAVVDADKKKGELMENDQDAMEYSSEEEEVDLQTALTGYQTKQRKLLEPVDHGKIEYEPFRKNFYVEVPELAKMSQEEVNVFRLEMEGITVKGKGCPKPIKSWVQCGISMKILNSLKKHGYEKPTPIQTQAIPAIMSGRDLIGIAKTGSGKTIAFLLPMFRHIMDQRSLEEGEGPIAVIMTPTRELALQITKECKKFSKTLGLRVVCVYGGTGISEQIAELKRGAEIIVCTPGRMIDMLAANSGRVTNLRRVTYVVLDEADRMFDMGFEPQVMRIVDNVRPDRQTVMFSATFPRAMEALARRILSKPIEVQVGGRSVVCSDVEQQVIVIEEEKKFLKLLELLGHYQESGSVIIFVDKQEHADGLLKDLMRASYPCMSLHGGIDQYDRDSIINDFKNGTCKLLVATSVAARGLDVKHLILVVNYSCPNHYEDYVHRAGRTGRAGNKGYAYTFITEDQARYAGDIIKALELSGTAVPPDLEKLWSDFKDQQKAEGKIIKKSSGFSGKGFKFDETEQALANERKKLQKAALGLQDSDDEDAAVDIDEQIESMFNSKKRVKDMAAPGTSSVPAPTAGNAEKLEIAKRLALRINAQKNLGIESQVDVMQQATNAILRGGTILAPTVSAKTIAEQLAEKINAKLNYVPLEKQEEERQEGGQSESFKRYEEELEINDFPQTARWKVTSKEALQRISEYSEAAITIRGTYFPPGKEPKEGERKIYLAIESANELAVQKAKAEITRLIKEELIRLQNSYQPTNKGRYKVL.

Over residues 1–24 (MGRESRHYRKRSASRGRSGSRSRS) the composition is skewed to basic residues. Residues 1–227 (MGRESRHYRK…TEMEDEELDP (227 aa)) are disordered. Gly-2 is lipidated: N-myristoyl glycine. Over residues 26–49 (SPSDKRSKRGDDRRSRSRDRDRRR) the composition is skewed to basic and acidic residues. 2 stretches are compositionally biased toward basic residues: residues 50-73 (ERSR…RSRS) and 81-103 (ERRR…RRSR). The span at 112–200 (KKTENRSRSK…EMKQGKKWSL (89 aa)) shows a compositional bias: basic and acidic residues. The stretch at 152-197 (DQNKLEEEMRKRKERVEKWREEQRKKAMENIGELKKEIEEMKQGKK) forms a coiled coil. A Glycyl lysine isopeptide (Lys-Gly) (interchain with G-Cter in SUMO2) cross-link involves residue Lys-186. Ser-199 bears the Phosphoserine mark. Over residues 201-211 (EDDDDDEDDPA) the composition is skewed to acidic residues. At Lys-263 the chain carries N6-acetyllysine. At Tyr-294 the chain carries Phosphotyrosine. 2 positions are modified to phosphoserine: Ser-295 and Ser-296. Lys-325 participates in a covalent cross-link: Glycyl lysine isopeptide (Lys-Gly) (interchain with G-Cter in SUMO2). Ser-346 is subject to Phosphoserine. The short motif at 372–400 (KSWVQCGISMKILNSLKKHGYEKPTPIQT) is the Q motif element. The 179-residue stretch at 403 to 581 (IPAIMSGRDL…RRILSKPIEV (179 aa)) folds into the Helicase ATP-binding domain. Residue 416-423 (AKTGSGKT) participates in ATP binding. The DEAD box motif lies at 529-532 (DEAD). The 162-residue stretch at 592–753 (DVEQQVIVIE…AVPPDLEKLW (162 aa)) folds into the Helicase C-terminal domain. Lys-776 is subject to N6-acetyllysine. Lys-779 is covalently cross-linked (Glycyl lysine isopeptide (Lys-Gly) (interchain with G-Cter in SUMO2)). At Ser-804 the chain carries Phosphoserine. At Lys-904 the chain carries N6-acetyllysine. Residues Lys-908 and Lys-916 each participate in a glycyl lysine isopeptide (Lys-Gly) (interchain with G-Cter in SUMO2) cross-link. Ser-929 is subject to Phosphoserine.

This sequence belongs to the DEAD box helicase family. DDX46/PRP5 subfamily. In terms of assembly, component of the 17S U2 SnRNP complex, a ribonucleoprotein complex that contains small nuclear RNA (snRNA) U2 and a number of specific proteins. Within the 17S U2 SnRNP complex, DDX46 is part of the SF3B subcomplex, which is required for 'A' complex assembly formed by the stable binding of U2 snRNP to the branchpoint sequence in pre-mRNA. Recruited to the 17S U2 SnRNP complex following release of DDX42; DDX42 and DDX46 bind the SF3B subcomplex in a competitive manner.

It localises to the nucleus speckle. Its subcellular location is the nucleus. The protein localises to the cajal body. The catalysed reaction is ATP + H2O = ADP + phosphate + H(+). Its function is as follows. Component of the 17S U2 SnRNP complex of the spliceosome, a large ribonucleoprotein complex that removes introns from transcribed pre-mRNAs. The 17S U2 SnRNP complex (1) directly participates in early spliceosome assembly and (2) mediates recognition of the intron branch site during pre-mRNA splicing by promoting the selection of the pre-mRNA branch-site adenosine, the nucleophile for the first step of splicing. Within the 17S U2 SnRNP complex, DDX46 plays essential roles during assembly of pre-spliceosome and proofreading of the branch site. This Mus musculus (Mouse) protein is Probable ATP-dependent RNA helicase DDX46 (Ddx46).